Here is an 803-residue protein sequence, read N- to C-terminus: Spondin-1 (803 aa).

Residues 1 to 23 (MGLIFQPLFWQYVATSYALMVLG) form the signal peptide. In terms of domain architecture, Reelin spans 24 to 190 (FLDETVEKAI…DLTLEGGNEK (167 aa)). 14 cysteine pairs are disulfide-bonded: C39-C124, C152-C178, C195-C331, C196-C335, C198-C409, C437-C474, C448-C483, C453-C488, C496-C532, C507-C511, C542-C548, C553-C589, C564-C568, and C599-C604. The region spanning 191–383 (TIPDCCACGT…LTSLDHPQSP (193 aa)) is the Spondin domain. N-linked (GlcNAc...) asparagine glycosylation is present at N210. D320, D349, and D353 together coordinate Ca(2+). Residues 353–389 (DSGVTYESPNKPTIPQDKIRPLTSLDHPQSPSMTRGG) form a disordered region. Polar residues predominate over residues 354 to 365 (SGVTYESPNKPT). 5 consecutive TSP type-1 domains span residues 436–489 (TCIY…PGCS), 495–549 (TCMM…EECE), 552–605 (SCIV…PECH), 608–662 (PCVL…PECP), and 664–717 (SCEL…RKCQ). N677 is a glycosylation site (N-linked (GlcNAc...) asparagine). The tract at residues 722 to 741 (NERRHLKDAREKRRSEKIKE) is disordered. The region spanning 750–802 (VCKMKPWTAWTECTKFCGGGIQERFMTVKKRFKSSQFTSCKDKKEIRACNVHP) is the TSP type-1 6 domain.

Expressed at high levels in the floor plate.

It is found in the secreted. The protein localises to the extracellular space. The protein resides in the extracellular matrix. Its function is as follows. Promotes the attachment of spinal cord and sensory neuron cells and the outgrowth of neurites in vitro. May contribute to the growth and guidance of axons in both the spinal cord and the PNS. The chain is Spondin-1 (spon1) from Xenopus laevis (African clawed frog).